The primary structure comprises 252 residues: Glucosamine-6-phosphate deaminase (252 aa).

The active-site Proton acceptor; for enolization step is the Asp67. The For ring-opening step role is filled by Asn137. The Proton acceptor; for ring-opening step role is filled by His139. Catalysis depends on Glu144, which acts as the For ring-opening step.

Belongs to the glucosamine/galactosamine-6-phosphate isomerase family. NagB subfamily.

The enzyme catalyses alpha-D-glucosamine 6-phosphate + H2O = beta-D-fructose 6-phosphate + NH4(+). It participates in amino-sugar metabolism; N-acetylneuraminate degradation; D-fructose 6-phosphate from N-acetylneuraminate: step 5/5. Functionally, catalyzes the reversible isomerization-deamination of glucosamine 6-phosphate (GlcN6P) to form fructose 6-phosphate (Fru6P) and ammonium ion. The protein is Glucosamine-6-phosphate deaminase of Staphylococcus aureus (strain MRSA252).